A 339-amino-acid chain; its full sequence is Anthranilate phosphoribosyltransferase (339 aa).

5-phospho-alpha-D-ribose 1-diphosphate is bound by residues glycine 82, 85-86, threonine 90, 92-95, 110-118, and serine 122; these read GD, NIST, and KHGNRSASG. Anthranilate is bound at residue glycine 82. Serine 94 lines the Mg(2+) pocket. Asparagine 113 serves as a coordination point for anthranilate. An anthranilate-binding site is contributed by arginine 168. Residues aspartate 226 and glutamate 227 each coordinate Mg(2+).

Belongs to the anthranilate phosphoribosyltransferase family. In terms of assembly, homodimer. Mg(2+) serves as cofactor.

The enzyme catalyses N-(5-phospho-beta-D-ribosyl)anthranilate + diphosphate = 5-phospho-alpha-D-ribose 1-diphosphate + anthranilate. The protein operates within amino-acid biosynthesis; L-tryptophan biosynthesis; L-tryptophan from chorismate: step 2/5. Functionally, catalyzes the transfer of the phosphoribosyl group of 5-phosphorylribose-1-pyrophosphate (PRPP) to anthranilate to yield N-(5'-phosphoribosyl)-anthranilate (PRA). The sequence is that of Anthranilate phosphoribosyltransferase from Methanosphaerula palustris (strain ATCC BAA-1556 / DSM 19958 / E1-9c).